The chain runs to 200 residues: MKKKAIFGGTFNPIHNAHLNIAAKSIEKLQLDELIFVPSGNPPHKSEKGIAPAELRYEMVKEAIKDNCKFRIDDYEIKKKGISYTYETLEHFSRSQKDVDWFFIAGLDSLMDLDKWRNVNTILSLCKFIVFNRSGYNKSQVLEQKEYLEKKYINNIVFLDIKPIDISSTIIRQKIRENEYIGDLVPEKIYDIIKKNKLYV.

The protein belongs to the NadD family.

It carries out the reaction nicotinate beta-D-ribonucleotide + ATP + H(+) = deamido-NAD(+) + diphosphate. It participates in cofactor biosynthesis; NAD(+) biosynthesis; deamido-NAD(+) from nicotinate D-ribonucleotide: step 1/1. Its function is as follows. Catalyzes the reversible adenylation of nicotinate mononucleotide (NaMN) to nicotinic acid adenine dinucleotide (NaAD). This is Probable nicotinate-nucleotide adenylyltransferase from Clostridium acetobutylicum (strain ATCC 824 / DSM 792 / JCM 1419 / IAM 19013 / LMG 5710 / NBRC 13948 / NRRL B-527 / VKM B-1787 / 2291 / W).